Reading from the N-terminus, the 3387-residue chain is Genome polyprotein (3387 aa).

Topologically, residues 1-100 (MNQRKKVVRP…LNILNGRKRS (100 aa)) are cytoplasmic. The segment at 36–71 (LFSGKGPLRMVLAFITFLRVLSIPPTAGILKRWGQL) is hydrophobic; homodimerization of capsid protein C. A propeptide spans 100–113 (STMTLLCLIPTAMA) (ER anchor for the capsid protein C, removed in mature form by serine protease NS3). The chain crosses the membrane as a helical span at residues 101–117 (TMTLLCLIPTAMAFHLS). Residues 118–237 (TRDGEPLMIV…GAWKHAQRVE (120 aa)) are Extracellular-facing. N-linked (GlcNAc...) asparagine; by host glycosylation occurs at Asn-182. The helical transmembrane segment at 238-258 (SWILRNPGFALLAGFMAYMIG) threads the bilayer. The Cytoplasmic portion of the chain corresponds to 259–265 (QTGIQRT). The chain crosses the membrane as a helical span at residues 266 to 279 (VFFVLMMLVAPSYG). Over 280-723 (MRCVGVGNRD…AVHQVFGSVY (444 aa)) the chain is Extracellular. Cystine bridges form between Cys-282-Cys-309, Cys-339-Cys-400, Cys-353-Cys-384, Cys-371-Cys-395, Cys-464-Cys-564, and Cys-581-Cys-612. A glycan (N-linked (GlcNAc...) asparagine; by host) is linked at Asn-346. The interval 377–390 (DRGWGNGCGLFGKG) is fusion peptide. A helical transmembrane segment spans residues 724 to 746 (TTMFGGVSWMVRILIGFLVLWIG). The Cytoplasmic segment spans residues 747 to 750 (TNSR). Residues 751–771 (NTSMAMTCIAVGGITLFLGFT) traverse the membrane as a helical segment. Residues 772-1194 (VHADTGCAVS…MLGDTMSGRM (423 aa)) lie on the Extracellular side of the membrane. Cystine bridges form between Cys-778-Cys-789, Cys-829-Cys-917, Cys-953-Cys-997, Cys-1054-Cys-1103, Cys-1065-Cys-1087, and Cys-1086-Cys-1090. Residues Asn-904 and Asn-981 are each glycosylated (N-linked (GlcNAc...) asparagine; by host). Residues 1195 to 1218 (GGQIHLAIMAVFKMSPGYVLGIFL) form a helical membrane-spanning segment. The Lumenal portion of the chain corresponds to 1219-1224 (RKLTSR). A helical transmembrane segment spans residues 1225-1243 (ETALMVIGMAMTTVLSIPH). Over 1244–1267 (DLMEFIDGISLGLILLKMVTHFDN) the chain is Cytoplasmic. A helical membrane pass occupies residues 1268 to 1288 (TQVGTLALSLTFIRSTMPLVM). A topological domain (lumenal) is located at residue Ala-1289. A helical transmembrane segment spans residues 1290 to 1308 (WRTIMAVLFVVTLIPLCRT). Residues 1309–1316 (SCLQKQSH) lie on the Lumenal side of the membrane. The helical transmembrane segment at 1317–1337 (WVEITALILGAQALPVYLMTL) threads the bilayer. Topologically, residues 1338 to 1345 (MKGASKRS) are cytoplasmic. Residues 1346-1366 (WPLNEGIMAVGLVSLLGSALL) traverse the membrane as a helical segment. Residues 1367-1369 (KND) lie on the Lumenal side of the membrane. A helical transmembrane segment spans residues 1370–1390 (VPLAGPMVAGGLLLAAYVMSG). At 1391–1437 (SSADLSLEKAANVQWDEMADITGSSPIIEVKQDEDGSFSIRDIEETN) the chain is on the cytoplasmic side. Positions 1397–1436 (LEKAANVQWDEMADITGSSPIIEVKQDEDGSFSIRDIEET) are interacts with and activates NS3 protease. The helical intramembrane region spans 1438–1458 (MITLLVKLALITVSGLYPLAI). The Cytoplasmic segment spans residues 1459-2146 (PVTMTLWYMW…LNELPESLET (688 aa)). The region spanning 1475 to 1652 (SGALWDVPSP…ERTGEPDYEV (178 aa)) is the Peptidase S7 domain. Residues His-1525, Asp-1549, and Ser-1609 each act as charge relay system; for serine protease NS3 activity in the active site. The Helicase ATP-binding domain occupies 1654–1810 (EDIFRKKRLT…QSNSPIEDIE (157 aa)). Positions 1658–1661 (RKKR) are important for RNA-binding. 1667–1674 (LHPGAGKT) contacts ATP. Residues 1758 to 1761 (DEAH) carry the DEAH box motif. One can recognise a Helicase C-terminal domain in the interval 1820 to 1987 (TGFDWITDYQ…IIPTLFGPER (168 aa)). An N6-acetyllysine; by host modification is found at Lys-1862. A helical membrane pass occupies residues 2147 to 2167 (LMLVALLGAMTAGIFLFFMQG). Residues 2168 to 2169 (KG) lie on the Lumenal side of the membrane. Residues 2170 to 2190 (IGKLSMGLIAIAVASGLLWVA) constitute an intramembrane region (helical). A topological domain (lumenal) is located at residue Glu-2191. The chain crosses the membrane as a helical span at residues 2192–2212 (IQPQWIAASIILEFFLMVLLI). At 2213–2225 (PEPEKQRTPQDNQ) the chain is on the cytoplasmic side. A helical transmembrane segment spans residues 2226–2246 (LIYVILTILTIIGLIAANEMG). Topologically, residues 2247 to 2270 (LIEKTKTDFGFYQVKTETTILDVD) are lumenal. Residues 2271–2291 (LRPASAWTLYAVATTILTPML) constitute an intramembrane region (helical). The Lumenal portion of the chain corresponds to 2292-2301 (RHTIENTSAN). Residues Asn-2297 and Asn-2301 are each glycosylated (N-linked (GlcNAc...) asparagine; by host). Positions 2302-2322 (LSLAAIANQAAVLMGLGKGWP) form an intramembrane region, helical. The Lumenal portion of the chain corresponds to 2323–2343 (LHRMDLGVPLLAMGCYSQVNP). The chain crosses the membrane as a helical span at residues 2344–2364 (TTLIASLVMLLVHYAIIGPGL). At 2365 to 2409 (QAKATREAQKRTAAGIMKNPTVDGITVIDLEPISYDPKFEKQLGQ) the chain is on the cytoplasmic side. The helical transmembrane segment at 2410-2430 (VMLLVLCAGQLLLMRTTWAFC) threads the bilayer. Residues 2431-2455 (EVLTLATGPVLTLWEGNPGRFWNTT) are Lumenal-facing. N-linked (GlcNAc...) asparagine; by host glycosylation occurs at Asn-2453. Residues 2456-2476 (IAVSTANIFRGSYLAGAGLAF) form a helical membrane-spanning segment. Residues 2477-3387 (SLIKNAQTPR…SAPFESEGVL (911 aa)) are Cytoplasmic-facing. In terms of domain architecture, mRNA cap 0-1 NS5-type MT spans 2489–2751 (TGTTGETLGE…DVDLGAGTRS (263 aa)). Ser-2543 is an S-adenosyl-L-methionine binding site. Ser-2543 carries the post-translational modification Phosphoserine. Lys-2548 (for 2'-O-MTase activity) is an active-site residue. An SUMO-interacting motif motif is present at residues 2564-2567 (VVDL). Positions 2573, 2574, 2591, 2592, 2618, and 2619 each coordinate S-adenosyl-L-methionine. The For 2'-O-MTase activity role is filled by Asp-2633. Ile-2634 is a binding site for S-adenosyl-L-methionine. Active-site for 2'-O-MTase activity residues include Lys-2668 and Glu-2704. Position 2706 (Tyr-2706) interacts with S-adenosyl-L-methionine. Zn(2+)-binding residues include Glu-2925, His-2929, Cys-2934, and Cys-2937. The 151-residue stretch at 3016 to 3166 (LIYADDTAGW…PLDERFSTSL (151 aa)) folds into the RdRp catalytic domain. Residues His-3200, Cys-3216, and Cys-3335 each contribute to the Zn(2+) site.

This sequence in the N-terminal section; belongs to the class I-like SAM-binding methyltransferase superfamily. mRNA cap 0-1 NS5-type methyltransferase family. As to quaternary structure, homodimer. Interacts (via N-terminus) with host EXOC1 (via C-terminus); this interaction results in EXOC1 degradation through the proteasome degradation pathway. Forms heterodimers with envelope protein E in the endoplasmic reticulum and Golgi. In terms of assembly, homodimer; in the endoplasmic reticulum and Golgi. Interacts with protein prM. Interacts with non-structural protein 1. As to quaternary structure, homodimer; Homohexamer when secreted. Interacts with envelope protein E. Interacts (via N-terminus) with serine protease NS3. In terms of assembly, forms a heterodimer with serine protease NS3. May form homooligomers. As to quaternary structure, forms a heterodimer with NS2B. Interacts with NS4B. Interacts with unphosphorylated RNA-directed RNA polymerase NS5; this interaction stimulates RNA-directed RNA polymerase NS5 guanylyltransferase activity. Interacts with host MAVS; this interaction inhibits the synthesis of IFN-beta. Interacts with host AUP1; the interaction occurs in the presence of Dengue virus NS4B and induces lipophagy which facilitates production of virus progeny particles. In terms of assembly, interacts with serine protease NS3. As to quaternary structure, homodimer. Interacts with host STAT2; this interaction inhibits the phosphorylation of the latter, and, when all viral proteins are present (polyprotein), targets STAT2 for degradation. Interacts with serine protease NS3. Interacts with host PAF1 complex; the interaction may prevent the recruitment of the PAF1 complex to interferon-responsive genes, and thus reduces the immune response. Specific enzymatic cleavages in vivo yield mature proteins. Cleavages in the lumen of endoplasmic reticulum are performed by host signal peptidase, whereas cleavages in the cytoplasmic side are performed by serine protease NS3. Signal cleavage at the 2K-4B site requires a prior NS3 protease-mediated cleavage at the 4A-2K site. Post-translationally, cleaved in post-Golgi vesicles by a host furin, releasing the mature small envelope protein M, and peptide pr. This cleavage is incomplete as up to 30% of viral particles still carry uncleaved prM. In terms of processing, N-glycosylated. N-glycosylated. The excreted form is glycosylated and this is required for efficient secretion of the protein from infected cells. Post-translationally, acetylated by host KAT5. Acetylation modulates NS3 RNA-binding and unwinding activities and plays an important positive role for viral replication. In terms of processing, sumoylation of RNA-directed RNA polymerase NS5 increases NS5 protein stability allowing proper viral RNA replication. Phosphorylated on serines residues. This phosphorylation may trigger NS5 nuclear localization.

The protein localises to the virion. It is found in the host nucleus. The protein resides in the host cytoplasm. It localises to the host perinuclear region. Its subcellular location is the secreted. The protein localises to the virion membrane. It is found in the host endoplasmic reticulum membrane. The protein resides in the host mitochondrion. It catalyses the reaction Selective hydrolysis of -Xaa-Xaa-|-Yaa- bonds in which each of the Xaa can be either Arg or Lys and Yaa can be either Ser or Ala.. It carries out the reaction RNA(n) + a ribonucleoside 5'-triphosphate = RNA(n+1) + diphosphate. The catalysed reaction is a ribonucleoside 5'-triphosphate + H2O = a ribonucleoside 5'-diphosphate + phosphate + H(+). The enzyme catalyses ATP + H2O = ADP + phosphate + H(+). It catalyses the reaction a 5'-end (5'-triphosphoguanosine)-ribonucleoside in mRNA + S-adenosyl-L-methionine = a 5'-end (N(7)-methyl 5'-triphosphoguanosine)-ribonucleoside in mRNA + S-adenosyl-L-homocysteine. It carries out the reaction a 5'-end (N(7)-methyl 5'-triphosphoguanosine)-ribonucleoside in mRNA + S-adenosyl-L-methionine = a 5'-end (N(7)-methyl 5'-triphosphoguanosine)-(2'-O-methyl-ribonucleoside) in mRNA + S-adenosyl-L-homocysteine + H(+). In terms of biological role, plays a role in virus budding by binding to the cell membrane and gathering the viral RNA into a nucleocapsid that forms the core of a mature virus particle. During virus entry, may induce genome penetration into the host cytoplasm after hemifusion induced by the surface proteins. Can migrate to the cell nucleus where it modulates host functions. Overcomes the anti-viral effects of host EXOC1 by sequestering and degrading the latter through the proteasome degradation pathway. Its function is as follows. Inhibits RNA silencing by interfering with host Dicer. Functionally, prevents premature fusion activity of envelope proteins in trans-Golgi by binding to envelope protein E at pH6.0. After virion release in extracellular space, gets dissociated from E dimers. Acts as a chaperone for envelope protein E during intracellular virion assembly by masking and inactivating envelope protein E fusion peptide. prM is the only viral peptide matured by host furin in the trans-Golgi network probably to avoid catastrophic activation of the viral fusion activity in acidic Golgi compartment prior to virion release. prM-E cleavage is inefficient, and many virions are only partially matured. These uncleaved prM would play a role in immune evasion. In terms of biological role, may play a role in virus budding. Exerts cytotoxic effects by activating a mitochondrial apoptotic pathway through M ectodomain. May display a viroporin activity. Its function is as follows. Binds to host cell surface receptor and mediates fusion between viral and cellular membranes. Envelope protein is synthesized in the endoplasmic reticulum in the form of heterodimer with protein prM. They play a role in virion budding in the ER, and the newly formed immature particle is covered with 60 spikes composed of heterodimer between precursor prM and envelope protein E. The virion is transported to the Golgi apparatus where the low pH causes dissociation of PrM-E heterodimers and formation of E homodimers. prM-E cleavage is inefficient, and many virions are only partially matured. These uncleaved prM would play a role in immune evasion. Functionally, involved in immune evasion, pathogenesis and viral replication. Once cleaved off the polyprotein, is targeted to three destinations: the viral replication cycle, the plasma membrane and the extracellular compartment. Essential for viral replication. Required for formation of the replication complex and recruitment of other non-structural proteins to the ER-derived membrane structures. Excreted as a hexameric lipoparticle that plays a role against host immune response. Antagonizing the complement function. Binds to the host macrophages and dendritic cells. Inhibits signal transduction originating from Toll-like receptor 3 (TLR3). Disrupts the host endothelial glycocalyx layer of host pulmonary microvascular endothelial cells, inducing degradation of sialic acid and shedding of heparan sulfate proteoglycans. NS1 induces expression of sialidases, heparanase, and activates cathepsin L, which activates heparanase via enzymatic cleavage. These effects are probably linked to the endothelial hyperpermeability observed in severe dengue disease. In terms of biological role, component of the viral RNA replication complex that functions in virion assembly and antagonizes the host immune response. Its function is as follows. Required cofactor for the serine protease function of NS3. May have membrane-destabilizing activity and form viroporins. Functionally, displays three enzymatic activities: serine protease, NTPase and RNA helicase. NS3 serine protease, in association with NS2B, performs its autocleavage and cleaves the polyprotein at dibasic sites in the cytoplasm: C-prM, NS2A-NS2B, NS2B-NS3, NS3-NS4A, NS4A-2K and NS4B-NS5. NS3 RNA helicase binds RNA and unwinds dsRNA in the 3' to 5' direction. Regulates the ATPase activity of the NS3 helicase activity. NS4A allows NS3 helicase to conserve energy during unwinding. Plays a role in the inhibition of the host innate immune response. Interacts with host MAVS and thereby prevents the interaction between RIGI and MAVS. In turn, IFN-beta production is impaired. Interacts with host AUP1 which mediates induction of lipophagy in host cells and facilitates production of virus progeny particles. In terms of biological role, functions as a signal peptide for NS4B and is required for the interferon antagonism activity of the latter. Its function is as follows. Induces the formation of ER-derived membrane vesicles where the viral replication takes place. Inhibits interferon (IFN)-induced host STAT1 phosphorylation and nuclear translocation, thereby preventing the establishment of cellular antiviral state by blocking the IFN-alpha/beta pathway. Functionally, replicates the viral (+) and (-) RNA genome, and performs the capping of genomes in the cytoplasm. NS5 methylates viral RNA cap at guanine N-7 and ribose 2'-O positions. Besides its role in RNA genome replication, also prevents the establishment of cellular antiviral state by blocking the interferon-alpha/beta (IFN-alpha/beta) signaling pathway. Inhibits host TYK2 and STAT2 phosphorylation, thereby preventing activation of JAK-STAT signaling pathway. May reduce immune responses by preventing the recruitment of the host PAF1 complex to interferon-responsive genes. In Aedes aegypti (Yellowfever mosquito), this protein is Genome polyprotein.